The chain runs to 95 residues: Small ribosomal subunit protein bS6 (95 aa).

The protein belongs to the bacterial ribosomal protein bS6 family.

Binds together with bS18 to 16S ribosomal RNA. The polypeptide is Small ribosomal subunit protein bS6 (Acholeplasma laidlawii (strain PG-8A)).